Here is a 319-residue protein sequence, read N- to C-terminus: Annexin A4 (319 aa).

Position 7 is a phosphothreonine (Thr7). Ser12 is modified (phosphoserine). Annexin repeat units lie at residues 14-85 (FNAT…GLMT), 86-157 (PTVL…SLSA), 169-241 (ALMK…AIVK), and 245-316 (SKPS…VLCG). An N6-acetyllysine mark is found at Lys213, Lys293, and Lys300.

Belongs to the annexin family.

Its subcellular location is the zymogen granule membrane. Functionally, calcium/phospholipid-binding protein which promotes membrane fusion and is involved in exocytosis. The protein is Annexin A4 (Anxa4) of Mus musculus (Mouse).